The chain runs to 890 residues: Nucleoside hydrolase 3 (890 aa).

An N-terminal signal peptide occupies residues 1–21; the sequence is MLTSPTLKSLWFLFTILGLLG. 7 N-linked (GlcNAc...) asparagine glycosylation sites follow: Asn55, Asn232, Asn371, Asn485, Asn580, Asn655, and Asn740.

The protein belongs to the IUNH family.

The protein localises to the secreted. It is found in the extracellular space. Its subcellular location is the apoplast. The enzyme catalyses a purine D-ribonucleoside + H2O = a purine nucleobase + D-ribose. It carries out the reaction inosine + H2O = hypoxanthine + D-ribose. It catalyses the reaction adenosine + H2O = D-ribose + adenine. In terms of biological role, extracellular purine-specific hydrolase present in the apoplastic fluid involved in the degradation of extracellular nucleosides, including inosine and adenosine, and which may participate in wound and pathogen responses (e.g. Botrytis cinerea). This is Nucleoside hydrolase 3 from Arabidopsis thaliana (Mouse-ear cress).